Consider the following 262-residue polypeptide: Phosphatidylserine decarboxylase proenzyme (262 aa).

Active-site charge relay system; for autoendoproteolytic cleavage activity residues include Asp-86, His-142, and Ser-226. The active-site Schiff-base intermediate with substrate; via pyruvic acid; for decarboxylase activity is the Ser-226. Ser-226 is modified (pyruvic acid (Ser); by autocatalysis).

This sequence belongs to the phosphatidylserine decarboxylase family. PSD-B subfamily. Prokaryotic type I sub-subfamily. In terms of assembly, heterodimer of a large membrane-associated beta subunit and a small pyruvoyl-containing alpha subunit. It depends on pyruvate as a cofactor. Post-translationally, is synthesized initially as an inactive proenzyme. Formation of the active enzyme involves a self-maturation process in which the active site pyruvoyl group is generated from an internal serine residue via an autocatalytic post-translational modification. Two non-identical subunits are generated from the proenzyme in this reaction, and the pyruvate is formed at the N-terminus of the alpha chain, which is derived from the carboxyl end of the proenzyme. The autoendoproteolytic cleavage occurs by a canonical serine protease mechanism, in which the side chain hydroxyl group of the serine supplies its oxygen atom to form the C-terminus of the beta chain, while the remainder of the serine residue undergoes an oxidative deamination to produce ammonia and the pyruvoyl prosthetic group on the alpha chain. During this reaction, the Ser that is part of the protease active site of the proenzyme becomes the pyruvoyl prosthetic group, which constitutes an essential element of the active site of the mature decarboxylase.

It localises to the cell membrane. It catalyses the reaction a 1,2-diacyl-sn-glycero-3-phospho-L-serine + H(+) = a 1,2-diacyl-sn-glycero-3-phosphoethanolamine + CO2. It participates in phospholipid metabolism; phosphatidylethanolamine biosynthesis; phosphatidylethanolamine from CDP-diacylglycerol: step 2/2. In terms of biological role, catalyzes the formation of phosphatidylethanolamine (PtdEtn) from phosphatidylserine (PtdSer). The polypeptide is Phosphatidylserine decarboxylase proenzyme (Bacillus mycoides (strain KBAB4) (Bacillus weihenstephanensis)).